Reading from the N-terminus, the 346-residue chain is G-protein coupled receptor homolog U12 (346 aa).

Over 1–31 (MICYSFAKNVTFAFLIILQNFFSQHDEEYKY) the chain is Extracellular. The chain crosses the membrane as a helical span at residues 32-56 (NYTCITPTVRKAQRLESVINGIMLT). Topologically, residues 57 to 83 (LILPVSTVVICTLLIYYKWTKQTITSP) are cytoplasmic. Residues 84 to 108 (YLITLFISDSLHSLTVLLLTLNREA) traverse the membrane as a helical segment. Residues 109–115 (LTNLNQA) lie on the Extracellular side of the membrane. A helical membrane pass occupies residues 116 to 142 (LCQCVLFVYSASCTYSLCMLAVISTIR). Over 143–159 (YRTLQRRTLNDKNNNHI) the chain is Cytoplasmic. A helical transmembrane segment spans residues 160-181 (KRNVGILFLSSAMCAIPAVLYV). The Extracellular segment spans residues 182–208 (QVEKKKGNYGKCNIHISTQKAYDLFIG). Residues 209–229 (IKIVYCFLWGIFPTVIFSYFY) traverse the membrane as a helical segment. Residues 230-245 (VIFGKTLRALTQSKHN) lie on the Cytoplasmic side of the membrane. Residues 246 to 272 (KTLSFISLLILSFLCIQIPNLLVMSVE) form a helical membrane-spanning segment. Residues 273–286 (IFFLYIANTSCLGT) are Extracellular-facing. Residues 287–310 (IQREIVQIISRLMPEIHCLSNPLV) form a helical membrane-spanning segment. Over 311 to 346 (YAFTRTDFRLRFYDFIKCNLCNSSLKRKRNPLTIKN) the chain is Cytoplasmic.

It belongs to the G-protein coupled receptor 1 family.

The protein localises to the host cell membrane. This chain is G-protein coupled receptor homolog U12 (U12), found in Homo sapiens (Human).